The chain runs to 164 residues: MLELDLQLATEAPAPSEAQFREWCALALRQRTADSELTIRLVDEPEGRELNHTWRQKDYATNVLSFPADVPDELLDIPLLGDLVICVEVVEREAKEQGKELEAHWAHLVIHGCLHLLGYDHIDDDEAEEMETLEQTLLAELGHPDPYADDDAQKHSTVTIKDSE.

Zn(2+) contacts are provided by H111, H115, and H121. Residues 140 to 164 (ELGHPDPYADDDAQKHSTVTIKDSE) are disordered. Residues 155–164 (HSTVTIKDSE) are compositionally biased toward polar residues.

The protein belongs to the endoribonuclease YbeY family. It depends on Zn(2+) as a cofactor.

The protein localises to the cytoplasm. In terms of biological role, single strand-specific metallo-endoribonuclease involved in late-stage 70S ribosome quality control and in maturation of the 3' terminus of the 16S rRNA. The chain is Endoribonuclease YbeY from Pseudomonas fluorescens (strain SBW25).